The following is a 559-amino-acid chain: uncharacterized protein (559 aa).

The segment covering 1–10 (MSGRRGDHPG) has biased composition (basic and acidic residues). The segment at 1–76 (MSGRRGDHPG…ERSRVPPRTT (76 aa)) is disordered. 11 consecutive transmembrane segments (helical) span residues 128 to 148 (FAVD…AAAS), 155 to 175 (VALY…LIGP), 186 to 206 (VALA…IMNY), 208 to 228 (GATG…MMVF), 259 to 279 (VFGL…VEFV), 283 to 303 (LFQL…GASL), 358 to 378 (LWGN…PAFV), 387 to 407 (WVQL…NFAG), 428 to 448 (VLVT…ATAI), 490 to 510 (LAWV…WVGF), and 515 to 535 (ALLI…SLIP).

To M.leprae ML2143.

It is found in the cell membrane. This is an uncharacterized protein from Mycobacterium tuberculosis (strain CDC 1551 / Oshkosh).